The primary structure comprises 396 residues: Putative pyridoxal phosphate-dependent acyltransferase (396 aa).

A pyridoxal 5'-phosphate-binding site is contributed by 111 to 112 (GF). Position 136 (His136) interacts with substrate. Pyridoxal 5'-phosphate is bound by residues Ser186, 211–214 (DDAH), and 241–244 (TLSK). At Lys244 the chain carries N6-(pyridoxal phosphate)lysine. Thr358 contacts substrate.

This sequence belongs to the class-II pyridoxal-phosphate-dependent aminotransferase family. Homodimer. It depends on pyridoxal 5'-phosphate as a cofactor.

This is Putative pyridoxal phosphate-dependent acyltransferase from Bacillus cereus (strain ATCC 14579 / DSM 31 / CCUG 7414 / JCM 2152 / NBRC 15305 / NCIMB 9373 / NCTC 2599 / NRRL B-3711).